Here is a 405-residue protein sequence, read N- to C-terminus: MDKKLNNLILVLNCGSSSIKFAILNPDNKEKYLSGSVECLFLLETYITWQCLGTKHKKKIGANVNHKDALNFIIEQVFSQQKDIFKNLIGVGHRVVHGGTKIKKSTLIDSNIIKCIQDASSFAPLHNPANLIGIKMIIEKYPSLSRKNIAVFDTSFYCNMPETSFLYAIPYNFYKKYGIRRYGAHGISHNYVAHRASLMLNKQFKSLNIITCHLGNGSSISAICNGICVDTSMGLTPLEGLVMGTRSGDLDPSIIFFMNNHLNLSIDKIETILNKKSGLLGLSGISSDFRYFEKKYYCKKHAKRSVDIFCHRLSKYIAAYTSVLENRLDAVIFTGGIGENVPLIRELVFSRLSLLGFKINSNLNLSTIGGKSGLITEDNSTPVFVITTDEELAIAQETNSIINRK.

Asn-13 lines the Mg(2+) pocket. Residue Lys-20 coordinates ATP. Arg-94 serves as a coordination point for substrate. Asp-153 (proton donor/acceptor) is an active-site residue. ATP is bound by residues 213–217, 288–290, and 336–340; these read HLGNG, DFR, and GIGEN. Mg(2+) is bound at residue Glu-390.

The protein belongs to the acetokinase family. In terms of assembly, homodimer. Requires Mg(2+) as cofactor. Mn(2+) is required as a cofactor.

The protein resides in the cytoplasm. It catalyses the reaction acetate + ATP = acetyl phosphate + ADP. It participates in metabolic intermediate biosynthesis; acetyl-CoA biosynthesis; acetyl-CoA from acetate: step 1/2. Catalyzes the formation of acetyl phosphate from acetate and ATP. Can also catalyze the reverse reaction. This chain is Acetate kinase, found in Buchnera aphidicola subsp. Acyrthosiphon pisum (strain APS) (Acyrthosiphon pisum symbiotic bacterium).